The chain runs to 484 residues: Putative sodium/proton-dependent alanine carrier protein YrbD (484 aa).

11 consecutive transmembrane segments (helical) span residues 11–31, 66–88, 92–114, 139–159, 172–192, 205–225, 238–258, 292–312, 350–370, 390–410, and 416–436; these read VLWSTPVIYILLGIGFAFSIM, ALSGRVGTGNIAGVATAIAFGGP, FWMWAIAFIGAASAFVESTLAQI, WFAVLFAAAALIAMAFLMPGV, FGISPFVTGCGLVLLLGFIIF, IVPFMAIGYILLSLIIIVMNV, SAFALDSAFGGLIGMAISWGV, AFSVYIDTLFVCSATAFMILF, GFGAGFVAIALFFFAFTTIMA, WAMLGLKLIILAATFYGTVKT, and ALGDAGLGIMVWLNVIAIVLL.

Belongs to the alanine or glycine:cation symporter (AGCS) (TC 2.A.25) family.

The protein resides in the cell membrane. The protein is Putative sodium/proton-dependent alanine carrier protein YrbD (yrbD) of Bacillus subtilis (strain 168).